A 532-amino-acid chain; its full sequence is Zinc finger protein 350 (532 aa).

A KRAB domain is found at 8-79 (ITLEDVAVDF…EDGIHSGACS (72 aa)). 8 consecutive C2H2-type zinc fingers follow at residues 206-228 (HVCS…QVMH), 234-256 (HRCS…QRTH), 262-284 (YECP…QKTH), 290-312 (YICS…QRIH), 318-340 (YICN…QRFH), 346-368 (FVCS…QRIH), 374-396 (FECS…QRTH), and 402-424 (YGCN…KRIH). Residues 427-443 (EKQEAAKVENPPAERHS) are compositionally biased toward basic and acidic residues. The interval 427–465 (EKQEAAKVENPPAERHSSLHTSDVMQEKNSANGATTQVP) is disordered. A compositionally biased stretch (polar residues) spans 445–465 (LHTSDVMQEKNSANGATTQVP).

This sequence belongs to the krueppel C2H2-type zinc-finger protein family. As to quaternary structure, interacts with BRCA1. Interacts with RNF11. Widely expressed.

The protein localises to the nucleus. It is found in the nucleus matrix. Its function is as follows. Transcriptional repressor. Binds to a specific sequence, 5'-GGGxxxCAGxxxTTT-3', within GADD45 intron 3. The chain is Zinc finger protein 350 (ZNF350) from Homo sapiens (Human).